Consider the following 351-residue polypeptide: N-acetyl-gamma-glutamyl-phosphate reductase (351 aa).

Cys-154 is a catalytic residue.

The protein belongs to the NAGSA dehydrogenase family. Type 1 subfamily.

It is found in the cytoplasm. The enzyme catalyses N-acetyl-L-glutamate 5-semialdehyde + phosphate + NADP(+) = N-acetyl-L-glutamyl 5-phosphate + NADPH + H(+). The protein operates within amino-acid biosynthesis; L-arginine biosynthesis; N(2)-acetyl-L-ornithine from L-glutamate: step 3/4. Catalyzes the NADPH-dependent reduction of N-acetyl-5-glutamyl phosphate to yield N-acetyl-L-glutamate 5-semialdehyde. In Synechocystis sp. (strain ATCC 27184 / PCC 6803 / Kazusa), this protein is N-acetyl-gamma-glutamyl-phosphate reductase.